The following is a 356-amino-acid chain: Nucleosome assembly protein 1;4 (356 aa).

A coiled-coil region spans residues 34 to 88; it reads VNALKNKLQNLAGQHSDILETLTPQVRKRVDVLRELQSQHDELESHFFEERAALE. The short motif at 55–70 is the Nuclear export signal element; the sequence is LTPQVRKRVDVLRELQ. The Nuclear localization signal motif lies at 230–235; sequence KKKPKK. The disordered stretch occupies residues 304-356; that stretch reads FTGEAAEGDEFEDIEDDDDDDDDDDDEDDEDEEDEDDEEEEKSKKKSSALKVE. A compositionally biased stretch (acidic residues) spans 309–343; the sequence is AEGDEFEDIEDDDDDDDDDDDEDDEDEEDEDDEEE. The span at 347-356 shows a compositional bias: basic residues; that stretch reads KKKSSALKVE.

This sequence belongs to the nucleosome assembly protein (NAP) family. As to quaternary structure, can form homomeric and heteromeric protein complexes with NAP1;3. Binds histones H2A and H2B in vivo. Also able to bind histones H1 and H4 in vitro. Interacts with CYCB1;1 and with alpha tubulin.

It localises to the nucleus. Its subcellular location is the cytoplasm. May modulate chromatin structure by regulation of nucleosome assembly/disassembly. Could function together with B-type cyclins in the regulation of microtubule dynamics. This chain is Nucleosome assembly protein 1;4 (NAP1;4), found in Nicotiana tabacum (Common tobacco).